A 135-amino-acid chain; its full sequence is Transcription antitermination protein NusB (135 aa).

It belongs to the NusB family.

Involved in transcription antitermination. Required for transcription of ribosomal RNA (rRNA) genes. Binds specifically to the boxA antiterminator sequence of the ribosomal RNA (rrn) operons. In Shewanella piezotolerans (strain WP3 / JCM 13877), this protein is Transcription antitermination protein NusB.